The chain runs to 558 residues: MKLFKSILLIAACHAAQASATIDINADPNLTGAAPLTGILNGQKSDTQNMSGFDNTPPPAPPVVMSRMFGAQLFNGTSADSGATVGFNPDYILNPGDSIQVRLWGAFTFDGALQVDPKGNIFLPNVGPVKIAGVSNSQLNALVTSKVKEVYQSNVNVYASLLQAQPVKVYVTGFVRNPGLYGGVTSDSLLNYLIKAGGVDPERGSYVDIVVKRGNRVRSNVNLYDFLLNGKLGLSQFADGDTIIVGPRQHTFSVQGDVFNSYDFEFRESSIPVTEALSWARPKPGATHITIMRKQGLQKRSEYYPISSAPGRMLQNGDTLIVSTDRYAGTIQVRVEGAHSGEHAMVLPYGSTMRAVLEKVRPNSMSQMNAVQLYRPSVAQRQKEMLNLSLQKLEEASLSAQSSTKEEASLRMQEAQLISRFVAKARTVVPKGEVILNESNIDSVLLEDGDVINIPEKTSLVMVHGEVLFPNAVSWQKGMTTEDYIEKCGGLTQKSGNARIIVIRQNGARVNAEDVDSLKPGDEIMVLPKYESKNIEVTRGISTILYQLAVGAKVILSL.

The N-terminal stretch at 1–20 (MKLFKSILLIAACHAAQASA) is a signal peptide.

To E.coli K1 KpsD.

Its subcellular location is the periplasm. Functionally, involved in the translocation of the polysialic acid capsule across the outer membrane to the cell surface. May function as the periplasmic binding element of the PSA transport system, in which it transiently interacts with the membrane component of the transporter, binds polysaccharide and transports the polymer to a component in the outer membrane. This is Polysialic acid transport protein KpsD (kpsD) from Escherichia coli.